Reading from the N-terminus, the 197-residue chain is Protein shisa-4 (197 aa).

The N-terminal stretch at 1 to 27 (MPPAGPRGTAPLAAVVLLVLGAPLALA) is a signal peptide. The Extracellular segment spans residues 28–87 (SEDCLWYLDRNGSWHPGFDCEFFTFCCGTCYQRYCCRDLTLLITERQQKHCLAFSPKTIA). The chain crosses the membrane as a helical span at residues 88-108 (GIASAVILFVAVVATTICCFL). Residues 109-197 (CSCCYLYRRR…MPPQPSYPGA (89 aa)) are Cytoplasmic-facing.

It belongs to the shisa family.

It is found in the membrane. The sequence is that of Protein shisa-4 (Shisa4) from Mus musculus (Mouse).